Here is a 369-residue protein sequence, read N- to C-terminus: Cobalt-precorrin-5B C(1)-methyltransferase (369 aa).

Belongs to the CbiD family.

The enzyme catalyses Co-precorrin-5B + S-adenosyl-L-methionine = Co-precorrin-6A + S-adenosyl-L-homocysteine. It functions in the pathway cofactor biosynthesis; adenosylcobalamin biosynthesis; cob(II)yrinate a,c-diamide from sirohydrochlorin (anaerobic route): step 6/10. Functionally, catalyzes the methylation of C-1 in cobalt-precorrin-5B to form cobalt-precorrin-6A. In Brucella melitensis biotype 2 (strain ATCC 23457), this protein is Cobalt-precorrin-5B C(1)-methyltransferase.